The sequence spans 590 residues: L-erythrulose kinase (590 aa).

The DhaK domain maps to 7-331 (QPSSFARELT…WRAPADAPAF (325 aa)). His217 (tele-hemiaminal-histidine intermediate) is an active-site residue. Residues 366-568 (HCVAAALNAA…LAMILDAVSA (203 aa)) enclose the DhaL domain. ADP-binding positions include 398–401 (HGIG), 441–442 (TS), Gly483, Arg540, and 553–555 (DAG).

It catalyses the reaction L-erythrulose + ATP = L-erythrulose 1-phosphate + ADP + H(+). It functions in the pathway carbohydrate metabolism. Functionally, involved in catabolism of D-apiose. Catalyzes the phosphorylation of L-erythrulose to L-erythrulose 1-phosphate. Can also phosphorylate D-erythrulose and dihydroxyacetone in vitro. The protein is L-erythrulose kinase of Pectobacterium atrosepticum (strain SCRI 1043 / ATCC BAA-672) (Erwinia carotovora subsp. atroseptica).